The primary structure comprises 83 residues: Antitoxin ChpS (83 aa).

One can recognise a SpoVT-AbrB domain in the interval 3–48 (ITIKRWGNSAGMVIPNIVMKELNLQPGQSVEAQVSNNQLILTPISR).

It belongs to the PemI family. As to quaternary structure, interacts with ChpB, inhibiting its endoribonuclease activity.

Functionally, antitoxin component of a type II toxin-antitoxin (TA) system. May be involved in the regulation of cell growth. It acts as a suppressor of the endoribonuclease (inhibitory function) of ChpB protein. Both ChpS and ChpB probably bind to the promoter region of the chpS-chpB operon to autoregulate their synthesis. This is Antitoxin ChpS (chpS) from Escherichia coli (strain K12).